Here is a 243-residue protein sequence, read N- to C-terminus: Protein S40-7 (243 aa).

Disordered regions lie at residues 1-68 and 107-143; these read MNKN…KSGL and SSTA…ERLP. The span at 10 to 20 shows a compositional bias: polar residues; sequence SSPSSLATISD. Residues 22–32 are compositionally biased toward acidic residues; it reads ADGELNEDDIF. Polar residues predominate over residues 47–67; it reads PVSSPAKQQTPARQLQRSKSG.

The protein belongs to the senescence regulator S40 family.

It is found in the cytoplasm. This Arabidopsis thaliana (Mouse-ear cress) protein is Protein S40-7.